The primary structure comprises 352 residues: Homeobox protein Mohawk (352 aa).

The tract at residues 19–54 is disordered; the sequence is GASERERGGRPYSGVLDSPHARPEVGIPDGPPLKDN. Positions 71 to 132 form a DNA-binding region, homeobox; TALE-type; that stretch reads VRHKRQALQD…NARRRLKNTV (62 aa). Disordered regions lie at residues 159 to 189 and 245 to 301; these read VSSD…VHHP and TRQR…PSKD.

The protein belongs to the TALE/IRO homeobox family.

The protein localises to the nucleus. Functionally, may act as a morphogenetic regulator of cell adhesion. This chain is Homeobox protein Mohawk (MKX), found in Homo sapiens (Human).